The chain runs to 120 residues: Chaperonin GroEL (120 aa).

23-27 (DGTTT) is a binding site for ATP.

Belongs to the chaperonin (HSP60) family. As to quaternary structure, forms a cylinder of 14 subunits composed of two heptameric rings stacked back-to-back. Interacts with the co-chaperonin GroES.

It localises to the cytoplasm. It carries out the reaction ATP + H2O + a folded polypeptide = ADP + phosphate + an unfolded polypeptide.. In terms of biological role, together with its co-chaperonin GroES, plays an essential role in assisting protein folding. The GroEL-GroES system forms a nano-cage that allows encapsulation of the non-native substrate proteins and provides a physical environment optimized to promote and accelerate protein folding. The polypeptide is Chaperonin GroEL (Mycolicibacterium rhodesiae (Mycobacterium rhodesiae)).